The sequence spans 183 residues: Shikimate kinase (183 aa).

18-23 (GVGKTT) is an ATP binding site. Residue T22 coordinates Mg(2+). Positions 40, 64, and 86 each coordinate substrate. An ATP-binding site is contributed by R125. Substrate is bound at residue R143.

The protein belongs to the shikimate kinase family. As to quaternary structure, monomer. The cofactor is Mg(2+).

Its subcellular location is the cytoplasm. The enzyme catalyses shikimate + ATP = 3-phosphoshikimate + ADP + H(+). The protein operates within metabolic intermediate biosynthesis; chorismate biosynthesis; chorismate from D-erythrose 4-phosphate and phosphoenolpyruvate: step 5/7. In terms of biological role, catalyzes the specific phosphorylation of the 3-hydroxyl group of shikimic acid using ATP as a cosubstrate. The sequence is that of Shikimate kinase from Oceanobacillus iheyensis (strain DSM 14371 / CIP 107618 / JCM 11309 / KCTC 3954 / HTE831).